Here is a 192-residue protein sequence, read N- to C-terminus: Recombination protein RecR (192 aa).

The C4-type zinc finger occupies 51-66 (CQTCFHLSADPECEIC). The Toprim domain occupies 74–168 (GLICVVADSR…PVSRIAYGLP (95 aa)).

This sequence belongs to the RecR family.

Functionally, may play a role in DNA repair. It seems to be involved in an RecBC-independent recombinational process of DNA repair. It may act with RecF and RecO. This is Recombination protein RecR from Parasynechococcus marenigrum (strain WH8102).